Reading from the N-terminus, the 2193-residue chain is ATP-dependent helicase BRM (2193 aa).

Position 1 is an N-acetylmethionine (methionine 1). Over residues methionine 1 to proline 10 the composition is skewed to gly residues. Disordered regions lie at residues methionine 1 to glutamine 126, methionine 175 to methionine 231, glutamine 293 to lysine 466, serine 511 to glycine 558, and threonine 580 to arginine 649. The span at alanine 23–glutamine 62 shows a compositional bias: low complexity. Residues valine 38–glutamine 58 are a coiled coil. Residues glycine 79–asparagine 88 are compositionally biased toward gly residues. 3 stretches are compositionally biased toward low complexity: residues serine 91–serine 102, glutamine 110–glutamine 126, and proline 180–serine 192. Over residues glutamate 204 to threonine 223 the composition is skewed to polar residues. Residues alanine 301–proline 320 show a composition bias toward low complexity. 4 stretches are compositionally biased toward polar residues: residues proline 325–serine 339, serine 347–arginine 358, glutamine 383–lysine 412, and glutamine 421–proline 433. The segment covering serine 445–glycine 463 has biased composition (low complexity). A QLQ domain is found at glycine 463–proline 499. Basic and acidic residues-rich tracts occupy residues valine 517–lysine 537 and proline 611–lysine 621. Over residues aspartate 626 to serine 638 the composition is skewed to polar residues. Residues leucine 705–leucine 712 carry the Nuclear localization signal 1 motif. Residues valine 726–lysine 795 are a coiled coil. The Helicase ATP-binding domain occupies leucine 993–aspartate 1158. Aspartate 1006–threonine 1013 lines the ATP pocket. Residues aspartate 1109–arginine 1129 adopt a coiled-coil conformation. One can recognise a Helicase C-terminal domain in the interval isoleucine 1312–valine 1489. Disordered stretches follow at residues serine 1583–glutamine 1775 and leucine 1789–alanine 1894. Basic residues predominate over residues lysine 1608 to isoleucine 1617. Positions asparagine 1618–asparagine 1638 form a coiled coil. Serine 1641 bears the Phosphoserine mark. Over residues glycine 1642–leucine 1657 the composition is skewed to acidic residues. A compositionally biased stretch (basic and acidic residues) spans threonine 1821 to glutamine 1832. Low complexity predominate over residues serine 1833–valine 1842. 2 stretches are compositionally biased toward polar residues: residues alanine 1848–valine 1870 and aspartate 1882–alanine 1892. Residues arginine 1895–serine 2005 form the Bromo domain. The Nuclear localization signal 2 signature appears at glutamine 1901–isoleucine 1908. A compositionally biased stretch (polar residues) spans glycine 2022–threonine 2032. Residues glycine 2022 to leucine 2193 form a disordered region. At serine 2137 the chain carries Phosphoserine. A compositionally biased stretch (polar residues) spans leucine 2149–glycine 2166.

It belongs to the SNF2/RAD54 helicase family. In terms of assembly, interacts with SWI3B, SWI3C, H3 and H4, but not with SWI3A, SWI3D or BSH. Interacts with LFY. Interacts with REF6. Binds to FGT1. Highly expressed in inflorescences and leaves. Low expression in siliques, roots and seedlings. Detected in shoot apical meristem, root meristem, vascular tissue of developing leaves, petals, stamens filaments, anthers and carpels.

The protein resides in the nucleus. It carries out the reaction ATP + H2O = ADP + phosphate + H(+). ATPase subunit of a multiprotein complex equivalent of the SWI/SNF complex that acts by remodeling the chromatin by catalyzing an ATP-dependent alteration in the structure of nucleosomal DNA. Represses embryonic genes in leaves and controls shoot development and flowering. Activates flower homeotic genes. The association of BRM with its target genes requires REF6. Necessary to acquire heat stress (HS) memory, by globally binding to HS memory genes. This chain is ATP-dependent helicase BRM, found in Arabidopsis thaliana (Mouse-ear cress).